The chain runs to 333 residues: Homocysteine S-methyltransferase 2 (333 aa).

The 320-residue stretch at 8-327 (SMKDFLKQTG…TTIRAIHKRL (320 aa)) folds into the Hcy-binding domain. Zn(2+) contacts are provided by Cys-245, Cys-312, and Cys-313.

As to quaternary structure, monomer. Zn(2+) serves as cofactor. Expressed predominantly in roots. Expressed in rosette leaves, cauline leaves and developing seeds.

The catalysed reaction is S-methyl-L-methionine + L-homocysteine = 2 L-methionine + H(+). Its function is as follows. Catalyzes methyl transfer from S-methylmethionine (SMM) to adenosyl-L-homocysteine (AdoMet). SMM degradation (by HMT-1, HMT-2 and HMT-3) and biosynthesis (by MMT1) constitute the SMM cycle in plants, which is probably required to achieve short term control of AdoMet level. This Arabidopsis thaliana (Mouse-ear cress) protein is Homocysteine S-methyltransferase 2 (HMT-2).